A 321-amino-acid polypeptide reads, in one-letter code: MTTFKQQTIKEKETKRKYCIKGTTANLTQTHPNGPVCVNRGEEVANTTTLLDSGGGINKKSLLQNLLSKCKTTFQQSFTNANITLKDEKWLKNVRTAYFVCDHDGSVELAYLPNVLPKELVEEFTEKFESIQTGRKKDTGYSGILDNSMPFNYVTADLSQELGQYLSEIVNPQINYYISKLLTCVSSRTINYLVSLNDSYYALNNCLYPSTAFNSLKPSNDGHRIRKPHKDNLDITPSSLFYFGNFQNTEGYLELTDKNCKVFVQPGDVLFFKGNEYKHVVANITSGWRIGLVYFAHKGSKTKPYYEDTQKNSLKIHKETK.

Positions 198-298 constitute a Fe2OG dioxygenase domain; it reads DSYYALNNCL…RIGLVYFAHK (101 aa). 2-oxoglutarate contacts are provided by Asn-214 and Arg-224. Fe cation-binding residues include His-229 and Asp-231. Tyr-242 is a binding site for 2-oxoglutarate. His-279 contributes to the Fe cation binding site. Arg-289 is a 2-oxoglutarate binding site. Gln-310 lines the substrate pocket.

Fe(2+) serves as cofactor.

It catalyses the reaction a 5-methyl-2'-deoxycytidine in DNA + 2-oxoglutarate + O2 = a 5-hydroxymethyl-2'-deoxycytidine in DNA + succinate + CO2. The enzyme catalyses a 5-hydroxymethyl-2'-deoxycytidine in DNA + 2-oxoglutarate + O2 = a 5-formyl-2'-deoxycytidine in DNA + succinate + CO2 + H2O. It carries out the reaction a 5-formyl-2'-deoxycytidine in DNA + 2-oxoglutarate + O2 = a 5-carboxyl-2'-deoxycytidine in DNA + succinate + CO2 + H(+). Its function is as follows. Dioxygenase that catalyzes the conversion of the modified genomic base 5-methylcytosine (5mC) into 5-hydroxymethylcytosine (5hmC), and thereby plays a role in active DNA demethylation. Also mediates subsequent conversion of 5hmC into 5-formylcytosine (5fC), and conversion of 5fC to 5-carboxylcytosine (5caC). This Naegleria gruberi (Amoeba) protein is Tet-like dioxygenase 1.